The chain runs to 404 residues: Argininosuccinate synthase (404 aa).

ATP contacts are provided by residues 9–17 (AYSGGLDTS) and Ala36. L-citrulline is bound at residue Tyr87. Residue Gly117 coordinates ATP. Residues Thr119, Asn123, and Asp124 each coordinate L-aspartate. Asn123 is an L-citrulline binding site. Residues Arg127, Ser176, and Glu261 each contribute to the L-citrulline site.

It belongs to the argininosuccinate synthase family. Type 1 subfamily. As to quaternary structure, homotetramer.

It localises to the cytoplasm. It carries out the reaction L-citrulline + L-aspartate + ATP = 2-(N(omega)-L-arginino)succinate + AMP + diphosphate + H(+). It participates in amino-acid biosynthesis; L-arginine biosynthesis; L-arginine from L-ornithine and carbamoyl phosphate: step 2/3. This chain is Argininosuccinate synthase, found in Burkholderia pseudomallei (strain K96243).